The sequence spans 107 residues: uncharacterized protein (107 aa).

A compositionally biased stretch (basic and acidic residues) spans 88-97; it reads EEKKEKDKGK. Residues 88-107 form a disordered region; that stretch reads EEKKEKDKGKKGLLSRLKFW. Basic residues predominate over residues 98 to 107; the sequence is KGLLSRLKFW.

This is an uncharacterized protein from Methanocaldococcus jannaschii (strain ATCC 43067 / DSM 2661 / JAL-1 / JCM 10045 / NBRC 100440) (Methanococcus jannaschii).